The primary structure comprises 744 residues: Collagen alpha-1(VIII) chain (744 aa).

Residues 1-27 form the signal peptide; that stretch reads MAVLPGPLQLLGVLLTISLSSIRLIQA. The nonhelical region (NC2) stretch occupies residues 29-117; sequence AYYGIKPLPP…GKEIPLASLR (89 aa). Disordered stretches follow at residues 115-393 and 459-589; these read SLRG…GEPG and GPKG…PDMG. Residues 118–571 are triple-helical region (COL1); it reads GEQGPRGEPG…PGPPGPPGPP (454 aa). Positions 128–137 are enriched in pro residues; that stretch reads PRGPPGPPGL. Residues 168–178 are compositionally biased toward low complexity; sequence KPGAMGMPGAK. Gly residues-rich tracts occupy residues 203-217 and 328-337; these read GLPGIGKPGGPGLPG and GFPGGKGEQG. 2 stretches are compositionally biased toward low complexity: residues 466–496 and 538–556; these read QKGVPGLPGVPGLLGPKGEPGIPGDQGLQGP and AGLHGPPGKPGALGPQGQP. Positions 558-581 are enriched in pro residues; sequence LPGPPGPPGPPGPPAVMPPTPPPQ. Residues 572 to 744 form a nonhelical region (NC1) region; it reads AVMPPTPPPQ…SFSGYLLYPM (173 aa). Positions 611–744 constitute a C1q domain; the sequence is PAYEMPAFTA…SFSGYLLYPM (134 aa).

In terms of assembly, homotrimers, or heterotrimers in association with alpha 2(VIII) type collagens. Four homotrimers can form a tetrahedron stabilized by central interacting C-terminal NC1 trimers. Prolines at the third position of the tripeptide repeating unit (G-X-Y) are hydroxylated in some or all of the chains. In terms of processing, proteolytically cleaved by neutrophil elastase, in vitro. Proteolytic processing produces the C-terminal NC1 domain fragment, vastatin. In terms of tissue distribution, expressed primarily in the subendothelium of large blood vessels. Also expressed in arterioles and venules in muscle, heart, kidney, spleen, umbilical cord, liver and lung and is also found in connective tissue layers around hair follicles, around nerve bundles in muscle, in the dura of the optic nerve, in cornea and sclera, and in the perichondrium of cartilaginous tissues. In the kidney, expressed in mesangial cells, glomerular endothelial cells, and tubular epithelial cells. Also expressed in mast cells, and in astrocytes during the repair process. Expressed in Descemet's membrane. Specifically expressed in peritoneal fibroblasts and mesothelial cells.

It localises to the secreted. The protein localises to the extracellular space. Its subcellular location is the extracellular matrix. The protein resides in the basement membrane. Functionally, macromolecular component of the subendothelium. Major component of the Descemet's membrane (basement membrane) of corneal endothelial cells. Also a component of the endothelia of blood vessels. Necessary for migration and proliferation of vascular smooth muscle cells and thus, has a potential role in the maintenance of vessel wall integrity and structure, in particular in atherogenesis. In terms of biological role, vastatin, the C-terminal fragment comprising the NC1 domain, inhibits aortic endothelial cell proliferation and causes cell apoptosis. This chain is Collagen alpha-1(VIII) chain (COL8A1), found in Homo sapiens (Human).